Reading from the N-terminus, the 489-residue chain is Ubiquitin-like-specific protease ESD4 (489 aa).

A disordered region spans residues alanine 43–aspartate 66. The span at proline 51–arginine 60 shows a compositional bias: polar residues. A coiled-coil region spans residues alanine 200–leucine 223. Catalysis depends on residues histidine 380, aspartate 397, and cysteine 448.

The protein belongs to the peptidase C48 family. As to quaternary structure, interacts with NUA (via N-terminus). Interacts with KIN10. As to expression, expressed in seedlings, leaves, shoots, flowers and roots.

The protein resides in the nucleus membrane. The catalysed reaction is Hydrolysis of the alpha-linked peptide bond in the sequence Gly-Gly-|-Ala-Thr-Tyr at the C-terminal end of the small ubiquitin-like modifier (SUMO) propeptide, Smt3, leading to the mature form of the protein. A second reaction involves the cleavage of an epsilon-linked peptide bond between the C-terminal glycine of the mature SUMO and the lysine epsilon-amino group of the target protein.. Inhibited by thiol reagent and N-ethylmaleimide, but not by ubiquitin aldehyde, pepstatin A or benzamidine HCl. In terms of biological role, protease that catalyzes two essential functions in the SUMO pathway: processing of full-length SUMOs to their mature forms and deconjugation of SUMO from targeted proteins. Cleaves precursors of SUM1 and SUM2, but not of SUM3 or SUM5. Able to release SUM1 and SUM2 from conjugates, but unable to cleave SUM3. Acts predominantly as an isopeptidase, cleaving SUMO-conjugated proteins better than SUMO peptides. Plays an important role in the control of flowering time. This chain is Ubiquitin-like-specific protease ESD4 (ESD4), found in Arabidopsis thaliana (Mouse-ear cress).